We begin with the raw amino-acid sequence, 30 residues long: Cycloviolacin-O24 (30 aa).

The segment at residues 1–30 (GLPTCGETCFGGTCNTPGCTCDPWPVCTHN) is a cross-link (cyclopeptide (Gly-Asn)). Cystine bridges form between C5/C19, C9/C21, and C14/C27.

This is a cyclic peptide. In terms of tissue distribution, expressed in leaves but not in petals, petioles, roots and runners (at protein level).

Functionally, probably participates in a plant defense mechanism. Has hemolytic activity. In Viola odorata (Sweet violet), this protein is Cycloviolacin-O24.